The primary structure comprises 637 residues: tRNA uridine 5-carboxymethylaminomethyl modification enzyme MnmG (637 aa).

14 to 19 is a binding site for FAD; that stretch reads GAGHAG. 279-293 serves as a coordination point for NAD(+); sequence GPRYCPSIEDKVVRF.

This sequence belongs to the MnmG family. Homodimer. Heterotetramer of two MnmE and two MnmG subunits. FAD is required as a cofactor.

The protein localises to the cytoplasm. Its function is as follows. NAD-binding protein involved in the addition of a carboxymethylaminomethyl (cmnm) group at the wobble position (U34) of certain tRNAs, forming tRNA-cmnm(5)s(2)U34. The polypeptide is tRNA uridine 5-carboxymethylaminomethyl modification enzyme MnmG (Desulfitobacterium hafniense (strain DSM 10664 / DCB-2)).